The sequence spans 352 residues: AP2/ERF and B3 domain-containing transcription factor At1g51120 (352 aa).

The tract at residues 1–20 (MDEMSNVAKTTTETSGLTDS) is disordered. The span at 7–20 (VAKTTTETSGLTDS) shows a compositional bias: polar residues. Positions 46 to 103 (KFKGVVQQQNGHWGAQIYADHRRIWLGTFKSAHEAAAAYDSASIKLRSFDANSHRNFP) form a DNA-binding region, AP2/ERF. The TF-B3 DNA-binding region spans 178–297 (FQKELTPSDV…KTFLMIDVHH (120 aa)).

Belongs to the AP2/ERF transcription factor family. RAV subfamily.

The protein localises to the nucleus. Probably acts as a transcriptional activator. Binds to the GCC-box pathogenesis-related promoter element. May be involved in the regulation of gene expression by stress factors and by components of stress signal transduction pathways. This chain is AP2/ERF and B3 domain-containing transcription factor At1g51120, found in Arabidopsis thaliana (Mouse-ear cress).